The chain runs to 125 residues: Salivary protein 15 Ipac-1 (125 aa).

Residues 1-15 (MKVVCIILLFGIAAA) form the signal peptide. N82 and N94 each carry an N-linked (GlcNAc...) asparagine glycan. The CD4-binding stretch occupies residues 106 to 125 (GPSGQTCADKSKCVGHIPGC).

It belongs to the salp15 family. In terms of assembly, interacts with host CD4. Interacts with host DC-SIGN (CD209). Interacts with Borrelia outer surface protein C (OspC). In terms of tissue distribution, expressed in salivary glands.

Its subcellular location is the secreted. Its function is as follows. Salivary tick protein that downregulates host immune system by binding to both dendritic cells, and CD4(+) T cells. Specifically binds to the CD4 coreceptor on T cells. This interaction prevents the activation of the Src kinase, Lck, and its downstream substrate Zap-70, and results in deficient activation of PLCgamma1, the repression of calcium fluxes triggered by T-cell antigen receptor (TCR) ligation, and a subsequent reduction in interleukin-2 production. This salivary protein also binds to DC-SIGN (CD209) on dendritic cells (DC) and activates the Raf-1 kinase/MEK signaling pathway that results in down-regulating expression of pro-inflammatory cytokines. Furthermore, it inhibits T cell proliferation induced by DCs. It also inhibits in vitro keratinocyte inflammation induced by Borrelia burgdorferi or by the major outer surface protein (OspC) of Borrelia. In addition, it downregulates chemokines and monocyte chemoattractant protein 1, as well as several antimicrobial peptides such as defensins, cathelicidin, psoriasin, and RNase 7. Apart from its immunomodulatory activities, it is also associated with protection of Borrelia spirochetes from antibody-mediated killing through its binding to OspC. In vivo, tests on different immune disease animal models show promising therapeutic results, e.g., in inhibiting HIV infection, experimental autoimmune encephalomyelitis, transplantation rejection, and asthma. This is Salivary protein 15 Ipac-1 from Ixodes pacificus (Western black-legged tick).